A 316-amino-acid polypeptide reads, in one-letter code: MIIGTRGSQLALAQAETVARLLKAKGVETSLKIIKTSGDRFTDRPLHAVSSGVGAFVRELDEVMLEGKIDIAVHSMKDMPTIRPPTLPTVAVLKRDTPFDLLLTYDGTPLDELSEQSIIGTSSLRRAAQIKRYRPDLVTQDLRGNIDTRLRKLKEGKYDGILLAKAGLERMGWELEGEILSPDFFCPSPNQGTIAVVTRAETEAEAAVSRLDHTDSRIATEIERILISELGGGCTTPIGSYAEIMPDRKKLHVRAEVLSLDGEETVGINEFIPMAGGIEKARELGSSLVHMGGKKLADEALMQLSRDSCDSNDLHE.

Cys-234 bears the S-(dipyrrolylmethanemethyl)cysteine mark.

It belongs to the HMBS family. The cofactor is dipyrromethane.

It catalyses the reaction 4 porphobilinogen + H2O = hydroxymethylbilane + 4 NH4(+). It participates in porphyrin-containing compound metabolism; protoporphyrin-IX biosynthesis; coproporphyrinogen-III from 5-aminolevulinate: step 2/4. Its function is as follows. Tetrapolymerization of the monopyrrole PBG into the hydroxymethylbilane pre-uroporphyrinogen in several discrete steps. The chain is Probable porphobilinogen deaminase from Methanosarcina barkeri (strain Fusaro / DSM 804).